A 318-amino-acid polypeptide reads, in one-letter code: Probable RNA methyltransferase At5g51130 (318 aa).

Disordered regions lie at residues 1–61 (MGRD…NQEV) and 146–184 (NSTK…DSAE). Positions 16-34 (RSNENEKSVEKVVANEEKV) are enriched in basic and acidic residues. A compositionally biased stretch (low complexity) spans 37–52 (QQKQKQQQGQQGNCNQ). One can recognise a Bin3-type SAM domain in the interval 82-318 (DPRLKVLKKE…FDRQILAFQK (237 aa)).

This sequence belongs to the methyltransferase superfamily.

Probable RNA methyltransferase. This is Probable RNA methyltransferase At5g51130 from Arabidopsis thaliana (Mouse-ear cress).